The chain runs to 277 residues: Ribosomal RNA small subunit methyltransferase A (277 aa).

Residues Asn-18, Leu-20, Gly-45, Glu-66, Asp-89, and Asn-110 each coordinate S-adenosyl-L-methionine.

This sequence belongs to the class I-like SAM-binding methyltransferase superfamily. rRNA adenine N(6)-methyltransferase family. RsmA subfamily.

The protein localises to the cytoplasm. It catalyses the reaction adenosine(1518)/adenosine(1519) in 16S rRNA + 4 S-adenosyl-L-methionine = N(6)-dimethyladenosine(1518)/N(6)-dimethyladenosine(1519) in 16S rRNA + 4 S-adenosyl-L-homocysteine + 4 H(+). In terms of biological role, specifically dimethylates two adjacent adenosines (A1518 and A1519) in the loop of a conserved hairpin near the 3'-end of 16S rRNA in the 30S particle. May play a critical role in biogenesis of 30S subunits. The polypeptide is Ribosomal RNA small subunit methyltransferase A (Cupriavidus taiwanensis (strain DSM 17343 / BCRC 17206 / CCUG 44338 / CIP 107171 / LMG 19424 / R1) (Ralstonia taiwanensis (strain LMG 19424))).